The chain runs to 481 residues: ATP synthase subunit alpha (481 aa).

145 to 152 (GDRQTGKT) serves as a coordination point for ATP.

Belongs to the ATPase alpha/beta chains family. As to quaternary structure, F-type ATPases have 2 components, CF(1) - the catalytic core - and CF(0) - the membrane proton channel. CF(1) has five subunits: alpha(3), beta(3), gamma(1), delta(1), epsilon(1). CF(0) has three main subunits: a(1), b(2) and c(9-12). The alpha and beta chains form an alternating ring which encloses part of the gamma chain. CF(1) is attached to CF(0) by a central stalk formed by the gamma and epsilon chains, while a peripheral stalk is formed by the delta and b chains.

The protein resides in the cell membrane. It carries out the reaction ATP + H2O + 4 H(+)(in) = ADP + phosphate + 5 H(+)(out). Functionally, produces ATP from ADP in the presence of a proton gradient across the membrane. The alpha chain is a regulatory subunit. This is ATP synthase subunit alpha from Carsonella ruddii (strain PV).